We begin with the raw amino-acid sequence, 514 residues long: Probable lysine--tRNA ligase, cytoplasmic (514 aa).

Belongs to the class-II aminoacyl-tRNA synthetase family. As to quaternary structure, homodimer.

The protein localises to the cytoplasm. It carries out the reaction tRNA(Lys) + L-lysine + ATP = L-lysyl-tRNA(Lys) + AMP + diphosphate. The polypeptide is Probable lysine--tRNA ligase, cytoplasmic (Vairimorpha ceranae (strain BRL01) (Microsporidian parasite)).